The following is a 93-amino-acid chain: UPF0298 protein LMHCC_0506 (93 aa).

This sequence belongs to the UPF0298 family.

It localises to the cytoplasm. The protein is UPF0298 protein LMHCC_0506 of Listeria monocytogenes serotype 4a (strain HCC23).